Reading from the N-terminus, the 267-residue chain is NAD-capped RNA hydrolase NudC (267 aa).

Arginine 70 contributes to the substrate binding site. Residues cysteine 99 and cysteine 102 each coordinate Zn(2+). Glutamate 112 contacts substrate. Residues cysteine 117 and cysteine 122 each coordinate Zn(2+). Residue tyrosine 127 coordinates substrate. The 130-residue stretch at 128–257 folds into the Nudix hydrolase domain; the sequence is PVICPSIIVA…TIARALIEAT (130 aa). Positions 166, 182, and 186 each coordinate a divalent metal cation. The Nudix box signature appears at 167–188; that stretch reads GFVEVGESFEQTIHREVFEETG. 200–207 is a substrate binding site; sequence QPWAFPNS. Glutamate 227 provides a ligand contact to a divalent metal cation. Residue alanine 250 coordinates substrate.

This sequence belongs to the Nudix hydrolase family. NudC subfamily. Homodimer. Mg(2+) serves as cofactor. Mn(2+) is required as a cofactor. Requires Zn(2+) as cofactor.

The enzyme catalyses a 5'-end NAD(+)-phospho-ribonucleoside in mRNA + H2O = a 5'-end phospho-adenosine-phospho-ribonucleoside in mRNA + beta-nicotinamide D-ribonucleotide + 2 H(+). The catalysed reaction is NAD(+) + H2O = beta-nicotinamide D-ribonucleotide + AMP + 2 H(+). It carries out the reaction NADH + H2O = reduced beta-nicotinamide D-ribonucleotide + AMP + 2 H(+). In terms of biological role, mRNA decapping enzyme that specifically removes the nicotinamide adenine dinucleotide (NAD) cap from a subset of mRNAs by hydrolyzing the diphosphate linkage to produce nicotinamide mononucleotide (NMN) and 5' monophosphate mRNA. The NAD-cap is present at the 5'-end of some mRNAs and stabilizes RNA against 5'-processing. Has preference for mRNAs with a 5'-end purine. Catalyzes the hydrolysis of a broad range of dinucleotide pyrophosphates. This is NAD-capped RNA hydrolase NudC from Mannheimia succiniciproducens (strain KCTC 0769BP / MBEL55E).